The sequence spans 429 residues: Ribosomal RNA small subunit methyltransferase B (429 aa).

Residues 254-260 (CAAPGGK), Asp-277, Asp-303, and Asp-322 contribute to the S-adenosyl-L-methionine site. Catalysis depends on Cys-375, which acts as the Nucleophile. A disordered region spans residues 397–419 (ALSETGTPDQPGQQNLPGGEEGD). Residues 400–412 (ETGTPDQPGQQNL) show a composition bias toward polar residues.

This sequence belongs to the class I-like SAM-binding methyltransferase superfamily. RsmB/NOP family.

The protein resides in the cytoplasm. It catalyses the reaction cytidine(967) in 16S rRNA + S-adenosyl-L-methionine = 5-methylcytidine(967) in 16S rRNA + S-adenosyl-L-homocysteine + H(+). Specifically methylates the cytosine at position 967 (m5C967) of 16S rRNA. The polypeptide is Ribosomal RNA small subunit methyltransferase B (Salmonella heidelberg (strain SL476)).